We begin with the raw amino-acid sequence, 309 residues long: METDSIDSVIDDDEIHQKHQFSSTKSQGGATVVISPATSVYELLECPVCTNSMYPPIHQCHNGHTLCSTCKSRVHNRCPTCRQELGDIRCLALEKVAESLELPCKYYNLGCLGIFPYYSKLKHESQCNFRPYSCPYAGSECAAVGDITFLVAHLRDDHKVDMHTGCTFNHRYVKSNPREVENATWMLTVFQCFGQYFCLHFEAFQLGMAPVYMAFLRFMGDEDDARNYTYSLEVGGSGRKQTWEGTPRSVRDSHRKVRDSHDGLIIQRNMALFFSGGDKKELKLRVTGRIWKEQQNPDSGVCITSMCSS.

The RING-type zinc finger occupies 46-82 (CPVCTNSMYPPIHQCHNGHTLCSTCKSRVHNRCPTCR). The tract at residues 96-289 (VAESLELPCK…KELKLRVTGR (194 aa)) is SBD. Residues 99–159 (SLELPCKYYN…LVAHLRDDHK (61 aa)) form an SIAH-type zinc finger. Zn(2+)-binding residues include C104, C111, H123, C127, C134, C141, H153, and H158.

Belongs to the SINA (Seven in absentia) family. Homodimer; homodimerization is essential for its function. Interacts with UBC28 and NAC021/NAC022. Interacts with SINAT6. Interacts with ATG6 and TRAF1A. Interacts with WAV3. Interacts with FREE1. Expressed at low level in the vascular tissue of mature roots. Expressed in lateral roots and in elongation zone of the main root upon stimulation by auxin. Colocalizes with NAC021/NAC022.

The protein localises to the nucleus. Its subcellular location is the cytoplasm. The catalysed reaction is S-ubiquitinyl-[E2 ubiquitin-conjugating enzyme]-L-cysteine + [acceptor protein]-L-lysine = [E2 ubiquitin-conjugating enzyme]-L-cysteine + N(6)-ubiquitinyl-[acceptor protein]-L-lysine.. The protein operates within protein modification; protein ubiquitination. E3 ubiquitin-protein ligase that mediates ubiquitination and subsequent proteasomal degradation of target proteins. E3 ubiquitin ligases accept ubiquitin from an E2 ubiquitin-conjugating enzyme in the form of a thioester and then directly transfers the ubiquitin to targeted substrates. Mediates the ubiquitination and proteasomal-dependent degradation of NAC021/NAC022, a transcription activator that functions downstream of the auxin signals, thereby acting as a down-regulator of auxin signals. Involved in the formation of lateral roots. Is antagonist to SINAT1, SINAT2, SINAT3 and SINAT4 by suppressing FREE1 ubiquitination and degradation mediated by SINAT1, SINAT2, SINAT3 and SINAT4, and promoting FREE1 accumulation. This is E3 ubiquitin-protein ligase SINAT5 from Arabidopsis thaliana (Mouse-ear cress).